The sequence spans 541 residues: Zinc finger protein 655 (541 aa).

The disordered stretch occupies residues 1–22 (MEEVTSQEAAESPRGHFQPLEN). 6 C2H2-type zinc fingers span residues 243-265 (YKCDTCGKTFHQASALTRHQRIH), 271-293 (YKCKECEKSFSQSSSLSRHKRIH), 334-356 (YKCGTCERVFSRSVHLTQHQRTH), 361-383 (CKCTVCGSDFCHTSYLVEHQRLH), 411-433 (YSCNECGKDFRLNSHLIQHQRIH), and 439-461 (HECNECGKSFSQTSCLIQHHKMH). The segment at 495-517 (FDCDAWEENFSQRAHLIQHERVH) adopts a C2H2-type 7; degenerate zinc-finger fold.

Belongs to the krueppel C2H2-type zinc-finger protein family. Interacts with VAV1 and CDK4. Interacts with INTS13; promoting association with the integrator complex.

The protein resides in the nucleus. Probable transcription factor. The polypeptide is Zinc finger protein 655 (Znf655) (Mus musculus (Mouse)).